The sequence spans 266 residues: NAD-capped RNA hydrolase NudC (266 aa).

A substrate-binding site is contributed by Arg74. Zn(2+) is bound by residues Cys103, Cys106, Cys121, and Cys124. Residue Tyr129 coordinates substrate. The Nudix hydrolase domain maps to 130–253 (PRVSPCIIVA…TIARVLIDET (124 aa)). 3 residues coordinate a divalent metal cation: Ala163, Glu179, and Glu183. The short motif at 164-185 (GFVEAGETLEQCVAREVEEETG) is the Nudix box element. 197–204 (QPWAFPSN) provides a ligand contact to substrate. A divalent metal cation is bound at residue Glu224. Ala246 serves as a coordination point for substrate.

This sequence belongs to the Nudix hydrolase family. NudC subfamily. In terms of assembly, homodimer. The cofactor is Mg(2+). Mn(2+) is required as a cofactor. Requires Zn(2+) as cofactor.

The catalysed reaction is a 5'-end NAD(+)-phospho-ribonucleoside in mRNA + H2O = a 5'-end phospho-adenosine-phospho-ribonucleoside in mRNA + beta-nicotinamide D-ribonucleotide + 2 H(+). The enzyme catalyses NAD(+) + H2O = beta-nicotinamide D-ribonucleotide + AMP + 2 H(+). It catalyses the reaction NADH + H2O = reduced beta-nicotinamide D-ribonucleotide + AMP + 2 H(+). Functionally, mRNA decapping enzyme that specifically removes the nicotinamide adenine dinucleotide (NAD) cap from a subset of mRNAs by hydrolyzing the diphosphate linkage to produce nicotinamide mononucleotide (NMN) and 5' monophosphate mRNA. The NAD-cap is present at the 5'-end of some mRNAs and stabilizes RNA against 5'-processing. Has preference for mRNAs with a 5'-end purine. Catalyzes the hydrolysis of a broad range of dinucleotide pyrophosphates. The sequence is that of NAD-capped RNA hydrolase NudC from Photobacterium profundum (strain SS9).